The primary structure comprises 221 residues: Casparian strip membrane protein 3 (221 aa).

Positions 1–12 (MDIEKAGSRREE) are enriched in basic and acidic residues. Positions 1–27 (MDIEKAGSRREEEEPIVQRPKLDKGKG) are disordered. At 1–58 (MDIEKAGSRREEEEPIVQRPKLDKGKGKAHVFAPPMNYNRIMDKHKQEKMSPAGWKRG) the chain is on the cytoplasmic side. A helical transmembrane segment spans residues 59–79 (VAIFDFVLRLIAAITAMAAAA). At 80–109 (KMATTEETLPFFTQFLQFQADYTDLPTMSS) the chain is on the extracellular side. A helical transmembrane segment spans residues 110-130 (FVIVNSIVGGYLTLSLPFSIV). Topologically, residues 131 to 148 (CILRPLAVPPRLFLILCD) are cytoplasmic. Residues 149–169 (TVMMGLTLMAASASAAIVYLA) traverse the membrane as a helical segment. Over 170–194 (HNGNSSSNWLPVCQQFGDFCQGTSG) the chain is Extracellular. N-linked (GlcNAc...) asparagine glycosylation is present at asparagine 173. A helical membrane pass occupies residues 195-215 (AVVASFIAATLLMFLVILSAF). Over 216-221 (ALKRTT) the chain is Cytoplasmic.

Belongs to the Casparian strip membrane proteins (CASP) family. In terms of assembly, homodimer and heterodimers with other CASP proteins. Interacts with CASP1, CASP2, CASP4 and CASP5.

It is found in the cell membrane. In terms of biological role, regulates membrane-cell wall junctions and localized cell wall deposition. Required for establishment of the Casparian strip membrane domain (CSD) and the subsequent formation of Casparian strips, a cell wall modification of the root endodermis that determines an apoplastic barrier between the intraorganismal apoplasm and the extraorganismal apoplasm and prevents lateral diffusion. The polypeptide is Casparian strip membrane protein 3 (CASP3) (Arabidopsis thaliana (Mouse-ear cress)).